A 329-amino-acid chain; its full sequence is Alpha/beta hydrolase domain-containing protein 17C (329 aa).

The interval Ala46 to Gly85 is disordered. Residues Gly51–Glu79 are compositionally biased toward low complexity. Residues Ser211, Asp276, and His305 each act as charge relay system in the active site.

This sequence belongs to the AB hydrolase superfamily. ABHD17 family. Post-translationally, palmitoylated on cysteine residues located in a cysteine cluster at the N-terminus which promotes membrane localization. Palmitoylation is required for post-synaptic localization and for depalmitoylating activity towards DLG4/PSD95.

The protein localises to the recycling endosome membrane. The protein resides in the cell projection. Its subcellular location is the dendritic spine. It is found in the postsynaptic density membrane. It carries out the reaction S-hexadecanoyl-L-cysteinyl-[protein] + H2O = L-cysteinyl-[protein] + hexadecanoate + H(+). Functionally, hydrolyzes fatty acids from S-acylated cysteine residues in proteins. Has depalmitoylating activity towards NRAS and DLG4/PSD95. This is Alpha/beta hydrolase domain-containing protein 17C from Bos taurus (Bovine).